A 109-amino-acid polypeptide reads, in one-letter code: Nucleoid-associated protein Ssed_2851 (109 aa).

This sequence belongs to the YbaB/EbfC family. Homodimer.

It is found in the cytoplasm. The protein resides in the nucleoid. Functionally, binds to DNA and alters its conformation. May be involved in regulation of gene expression, nucleoid organization and DNA protection. The polypeptide is Nucleoid-associated protein Ssed_2851 (Shewanella sediminis (strain HAW-EB3)).